The primary structure comprises 807 residues: Glycerol-3-phosphate acyltransferase (807 aa).

Positions 308-313 match the HXXXXD motif motif; the sequence is CHRSHM.

Belongs to the GPAT/DAPAT family.

The protein resides in the cell inner membrane. It carries out the reaction sn-glycerol 3-phosphate + an acyl-CoA = a 1-acyl-sn-glycero-3-phosphate + CoA. The protein operates within phospholipid metabolism; CDP-diacylglycerol biosynthesis; CDP-diacylglycerol from sn-glycerol 3-phosphate: step 1/3. The sequence is that of Glycerol-3-phosphate acyltransferase from Shewanella pealeana (strain ATCC 700345 / ANG-SQ1).